Reading from the N-terminus, the 122-residue chain is MIQKETNLVVADNSGAKKVRCIHVFGGTGRRYASLGDQVIVSVKAAVPGGVVKKKEVCKAVVVRCVKEQRRKDGSYIRFDENAVVLLNAQGEPRGTRIFGPVARELRDRRYMKIVSLAPEVL.

Belongs to the universal ribosomal protein uL14 family. As to quaternary structure, part of the 50S ribosomal subunit. Forms a cluster with proteins L3 and L19. In the 70S ribosome, L14 and L19 interact and together make contacts with the 16S rRNA in bridges B5 and B8.

In terms of biological role, binds to 23S rRNA. Forms part of two intersubunit bridges in the 70S ribosome. The chain is Large ribosomal subunit protein uL14 from Chlorobium luteolum (strain DSM 273 / BCRC 81028 / 2530) (Pelodictyon luteolum).